The primary structure comprises 441 residues: MFLPQEIIRKKRDNLTLSQQEIQQFVAGITDNSVADSQIAALAMAIYFNGMELEENVHLALAMRDSGRRMHWKDLNLPGPIVDKHSTGGVGDVVSLMLGPMVAACGGFVPMISGRGLGHTGGTLDKLSAVPGYNPFPEPELFRKVVKDVGVAIIGQTSDLAPADRRFYATRDVTATVESIALITASILSKKLAAGLDVLVMDVKAGSGAFMPTMQKSIELAERIVKVGNGAGVATTALITEMSQPLASTAGNSIETREAVRYLKGDQRNPRLHEVTMALCAQMLIGGKLAADEADARAKLQAALDSGRAAEIFGRMVTALGGPADFMEHYDRHLAPAPIMRPVYADRAGYVGAMDTRGIGMAVCALGGGRRLATDVLDFRVGLSQFVELGQNIGKDTPLMMIHAADEASFEDAARRVKAAIRIDEAAPSELPLVYQIIRGE.

Belongs to the thymidine/pyrimidine-nucleoside phosphorylase family. As to quaternary structure, homodimer.

The enzyme catalyses thymidine + phosphate = 2-deoxy-alpha-D-ribose 1-phosphate + thymine. Its pathway is pyrimidine metabolism; dTMP biosynthesis via salvage pathway; dTMP from thymine: step 1/2. Functionally, the enzymes which catalyze the reversible phosphorolysis of pyrimidine nucleosides are involved in the degradation of these compounds and in their utilization as carbon and energy sources, or in the rescue of pyrimidine bases for nucleotide synthesis. This is Thymidine phosphorylase from Chromobacterium violaceum (strain ATCC 12472 / DSM 30191 / JCM 1249 / CCUG 213 / NBRC 12614 / NCIMB 9131 / NCTC 9757 / MK).